The chain runs to 22 residues: Putative lactoylglutathione lyase (22 aa).

A disordered region spans residues 1–22 (ITACLDPDGWKEPGPLPGISTK). The Proton donor/acceptor role is filled by Glu12.

It belongs to the glyoxalase I family. Zn(2+) serves as cofactor.

The catalysed reaction is (R)-S-lactoylglutathione = methylglyoxal + glutathione. Its pathway is secondary metabolite metabolism; methylglyoxal degradation; (R)-lactate from methylglyoxal: step 1/2. Catalyzes the conversion of hemimercaptal, formed from methylglyoxal and glutathione, to S-lactoylglutathione. In Pinus strobus (Eastern white pine), this protein is Putative lactoylglutathione lyase.